The primary structure comprises 192 residues: Xanthine phosphoribosyltransferase 2 (192 aa).

Xanthine-binding residues include Leu20 and Asn27. 131–135 contacts 5-phospho-alpha-D-ribose 1-diphosphate; the sequence is ANACA. Lys159 is a xanthine binding site.

The protein belongs to the purine/pyrimidine phosphoribosyltransferase family. Xpt subfamily. In terms of assembly, homodimer.

Its subcellular location is the cytoplasm. It carries out the reaction XMP + diphosphate = xanthine + 5-phospho-alpha-D-ribose 1-diphosphate. The protein operates within purine metabolism; XMP biosynthesis via salvage pathway; XMP from xanthine: step 1/1. Functionally, converts the preformed base xanthine, a product of nucleic acid breakdown, to xanthosine 5'-monophosphate (XMP), so it can be reused for RNA or DNA synthesis. In Clostridium perfringens (strain ATCC 13124 / DSM 756 / JCM 1290 / NCIMB 6125 / NCTC 8237 / Type A), this protein is Xanthine phosphoribosyltransferase 2.